The chain runs to 674 residues: Acyl-coenzyme A oxidase acox-1.1 (674 aa).

FAD is bound by residues 149 to 152 (YAQT), 157 to 158 (GT), and glycine 191. Substrate is bound by residues 285-288 (KINY) and arginine 295. FAD contacts are provided by residues arginine 320 and 340 to 343 (QQHR). Residues histidine 342, serine 392, histidine 396, and glutamine 404 each coordinate ATP. Position 411 (glycine 411) interacts with FAD. 433–434 (YE) provides a ligand contact to substrate. Glutamate 434 functions as the Proton acceptor in the catalytic mechanism. Residue glutamate 436 coordinates FAD. ATP-binding positions include 533–536 (RASR) and tyrosine 581. The short motif at 672 to 674 (SKL) is the Microbody targeting signal element.

Belongs to the acyl-CoA oxidase family. In terms of assembly, homodimer. Forms a heterodimer with acox-1.2. Forms a heterodimer with acox-1.3; the interaction may be important for the stability of acox-1.3. It depends on FAD as a cofactor. In terms of tissue distribution, expressed in hypodermis and intestine.

The protein localises to the peroxisome. The catalysed reaction is nonanoyl-CoA + O2 = (2E)-nonenoyl-CoA + H2O2. It carries out the reaction dodecanoyl-CoA + O2 = (2E)-dodecenoyl-CoA + H2O2. It catalyses the reaction a 2,3-saturated acyl-CoA + O2 = a (2E)-enoyl-CoA + H2O2. The enzyme catalyses heptanoyl-CoA + O2 = (2E)-heptenoyl-CoA + H2O2. The catalysed reaction is (8R)-8-hydroxynonanoyl-CoA + O2 = (2E,8R)-8-hydroxynonenoyl-CoA + H2O2. It carries out the reaction pentanoyl-CoA + O2 = (2E)-pentenoyl-CoA + H2O2. It catalyses the reaction hexadecanoyl-CoA + O2 = (2E)-hexadecenoyl-CoA + H2O2. The enzyme catalyses IC-asc-C7-CoA + O2 = IC-asc-DeltaC7-CoA + H2O2. The catalysed reaction is IC-asc-C9-CoA + O2 = IC-asc-DeltaC9-CoA + H2O2. It carries out the reaction asc-omegaC5-CoA + O2 = asc-omegaDeltaC5-CoA + H2O2. It catalyses the reaction asc-C7-CoA + O2 = asc-DeltaC7-CoA + H2O2. The enzyme catalyses asc-omegaC7-CoA + O2 = asc-omegaDeltaC7-CoA + H2O2. The catalysed reaction is asc-C9-CoA + O2 = asc-DeltaC9-CoA + H2O2. It carries out the reaction asc-C13-CoA + O2 = asc-DeltaC13-CoA + H2O2. The protein operates within lipid metabolism; peroxisomal fatty acid beta-oxidation. Activated by ATP. ATP binding leads to a conformational change that promotes FAD cofactor binding and enzyme activity. ATP binding likely occurs during acox-1.1 folding and/or dimer formation. Involved in the first step of peroxisomal beta-oxidation by catalyzing the desaturation of fatty acid-derived side chains. Specifically, catalyzes the desaturation of fatty acids heptanoyl-CoA (C7), nonanoyl-CoA (C9), dodecanoyl-CoA (C12) and to a lesser extent pentanoyl-CoA (C5) and hexadecanoyl-CoA (C16), and hydroxylated fatty acid hydroxynonanoyl-CoA. Also, catalyzes the desaturation fatty acid-derived side chains of ascaroside pheromones, which regulates development and behavior. Specifically, shortens ascaroside with 5-carbon omega side chain (asc-omega-C5), 7-carbon side chain (asc-C7), 9-carbon side chain (asc-C9), 11-carbon side chain (asc-C11), 13-carbon side chain (asc-C13), 15-carbon side chain (asc-C15) and to a lesser extent ascarosides with 7-omega-carbon side chain (asc-omega-C7). Also shortens indol-3-carbonyl(IC)-ascarosides with 7-carbon side chain (IC-asc-C7) and to a lesser extent (IC)-ascarosides with 9-carbon side chain (IC-asc-C9). May associate and regulate the folding and/or the catalytic activity of other acyl-coenzyme A oxidases including acox-1.2, acox-1.3, acox-1.4 and acox-3 modulating the type of ascarosides produced. In association with acox-1.3, catalyzes the desaturation of asc-C7-CoA but not of fatty acids or hydroxylated fatty acids. Involved in the biosynthesis of asc-C6-MK (daumone 2) and asc-delta-C9 (daumone 3) but not asc-C7 (daumone 1); daumones are pheromones produced during unfavourable growth conditions which promote entry into the dauer stage. The protein is Acyl-coenzyme A oxidase acox-1.1 of Caenorhabditis elegans.